Here is a 198-residue protein sequence, read N- to C-terminus: Recombination protein RecR (198 aa).

A C4-type zinc finger spans residues 57–72; the sequence is CSICGNLTDEDPCAIC. The Toprim domain occupies 80-175; that stretch reads STILIVEDSR…KVTRLARGLA (96 aa).

This sequence belongs to the RecR family.

Functionally, may play a role in DNA repair. It seems to be involved in an RecBC-independent recombinational process of DNA repair. It may act with RecF and RecO. This Streptococcus gordonii (strain Challis / ATCC 35105 / BCRC 15272 / CH1 / DL1 / V288) protein is Recombination protein RecR.